The following is a 472-amino-acid chain: ATP synthase subunit beta (472 aa).

156 to 163 serves as a coordination point for ATP; it reads GGAGVGKT.

This sequence belongs to the ATPase alpha/beta chains family. As to quaternary structure, F-type ATPases have 2 components, CF(1) - the catalytic core - and CF(0) - the membrane proton channel. CF(1) has five subunits: alpha(3), beta(3), gamma(1), delta(1), epsilon(1). CF(0) has three main subunits: a(1), b(2) and c(9-12). The alpha and beta chains form an alternating ring which encloses part of the gamma chain. CF(1) is attached to CF(0) by a central stalk formed by the gamma and epsilon chains, while a peripheral stalk is formed by the delta and b chains.

It localises to the cell membrane. It catalyses the reaction ATP + H2O + 4 H(+)(in) = ADP + phosphate + 5 H(+)(out). In terms of biological role, produces ATP from ADP in the presence of a proton gradient across the membrane. The catalytic sites are hosted primarily by the beta subunits. This chain is ATP synthase subunit beta, found in Symbiobacterium thermophilum (strain DSM 24528 / JCM 14929 / IAM 14863 / T).